Consider the following 645-residue polypeptide: Rab11 family-interacting protein 5 (645 aa).

A C2 domain is found at 1-146 (MALVRDPEPA…AGRAQHTQWY (146 aa)). Ser-176, Ser-283, Ser-286, Ser-307, Ser-357, and Ser-367 each carry phosphoserine. A disordered region spans residues 271 to 299 (GAELLTRSPSHSSWLSTEGGRDSIQSPKL). The segment covering 277 to 286 (RSPSHSSWLS) has biased composition (polar residues). Residues 341–550 (SHVYNEEPQP…STALSSGLER (210 aa)) are disordered. Low complexity predominate over residues 357–374 (SISGPFPPSSSLHSVPPR). Residues 375–387 (SSEEGSRSSDDSW) show a composition bias toward basic and acidic residues. Residues Ser-391 and Ser-395 each carry the phosphoserine modification. The span at 452–463 (RMGLFHHHHHQG) shows a compositional bias: basic residues. 5 positions are modified to phosphoserine: Ser-486, Ser-530, Ser-539, Ser-545, and Ser-640. The 63-residue stretch at 578–640 (KDSAVLDQSA…ETSPTLLQIS (63 aa)) folds into the FIP-RBD domain.

As to quaternary structure, interacts with RAB11FIP4. Interacts with NAPG. Interacts with RO60. Interacts with RAB11A that has been activated by GTP binding. Post-translationally, phosphorylated on serine and threonine residues. Phosphorylation at Ser-357 is PKA-dependent.

Its subcellular location is the cytoplasm. The protein resides in the recycling endosome membrane. It is found in the early endosome membrane. The protein localises to the golgi apparatus membrane. It localises to the cytoplasmic vesicle. Its subcellular location is the secretory vesicle membrane. The protein resides in the mitochondrion membrane. Functionally, rab effector involved in protein trafficking from apical recycling endosomes to the apical plasma membrane. Involved in insulin granule exocytosis. May regulate V-ATPase intracellular transport in response to extracellular acidosis. This is Rab11 family-interacting protein 5 from Mus musculus (Mouse).